The sequence spans 448 residues: Phosphoglucosamine mutase (448 aa).

Ser100 functions as the Phosphoserine intermediate in the catalytic mechanism. Mg(2+) is bound by residues Ser100, Asp240, Asp242, and Asp244. The residue at position 100 (Ser100) is a Phosphoserine.

This sequence belongs to the phosphohexose mutase family. Mg(2+) serves as cofactor. Activated by phosphorylation.

The enzyme catalyses alpha-D-glucosamine 1-phosphate = D-glucosamine 6-phosphate. Catalyzes the conversion of glucosamine-6-phosphate to glucosamine-1-phosphate. The sequence is that of Phosphoglucosamine mutase from Bacillus pumilus (strain SAFR-032).